The following is a 96-amino-acid chain: Co-chaperonin GroES (96 aa).

This sequence belongs to the GroES chaperonin family. Heptamer of 7 subunits arranged in a ring. Interacts with the chaperonin GroEL.

Its subcellular location is the cytoplasm. Its function is as follows. Together with the chaperonin GroEL, plays an essential role in assisting protein folding. The GroEL-GroES system forms a nano-cage that allows encapsulation of the non-native substrate proteins and provides a physical environment optimized to promote and accelerate protein folding. GroES binds to the apical surface of the GroEL ring, thereby capping the opening of the GroEL channel. In Polaromonas sp. (strain JS666 / ATCC BAA-500), this protein is Co-chaperonin GroES.